The following is a 385-amino-acid chain: Rhomboid domain-containing protein 3 (385 aa).

5 consecutive transmembrane segments (helical) span residues 13–33 (ALPLASSVLMLLLSCLWLLGA), 58–78 (LGHTALPGLLLSLLLLPTLGW), 93–113 (SAVLALATGLLAVLLAGLGLS), 146–166 (WLLPWLLLALTLLLSSEPPFL), and 168–188 (LLCGLLAGLAYAAGAFRWLEL). The region spanning 322 to 361 (SVSSLRLQQLQHMGFPTEQAAVALAATGRVEGAVSLLVEG) is the UBA domain.

Its subcellular location is the membrane. The sequence is that of Rhomboid domain-containing protein 3 (Rhbdd3) from Rattus norvegicus (Rat).